The primary structure comprises 296 residues: MMFKQYLQVTKPGIIFGNLISVIGGFLLASKGSIDYPLFIYTLVGVSLVVASGCVFNNFIDRDIDRKMERTKNRVLVKGLISPGVSLVYATLLGIAGFMLLWFGANPLACWLGVMGFVVYVGIYSLYMKRHSVYGTLIGSLSGAAPPVIGYCAVTGDFDSGAAILLAIFSLWQMPHSYAIAIFRLKDYQAANIPVLPVVKGISVAKNHITLYIIAFAVATLMLTLGGYAGYKYLVVAAAVSVWWLGMALRGYKVEDDKVWARKLFGFSIIAITALSIMMSVDFMVPNSQSLLTYVW.

Topologically, residues 1–9 (MMFKQYLQV) are cytoplasmic. The helical transmembrane segment at 10-28 (TKPGIIFGNLISVIGGFLL) threads the bilayer. At 29 to 37 (ASKGSIDYP) the chain is on the periplasmic side. A helical transmembrane segment spans residues 38–56 (LFIYTLVGVSLVVASGCVF). At 57 to 78 (NNFIDRDIDRKMERTKNRVLVK) the chain is on the cytoplasmic side. A helical transmembrane segment spans residues 79 to 97 (GLISPGVSLVYATLLGIAG). Topologically, residues 98-107 (FMLLWFGANP) are periplasmic. Residues 108–126 (LACWLGVMGFVVYVGIYSL) form a helical membrane-spanning segment. Residues 127 to 197 (YMKRHSVYGT…YQAANIPVLP (71 aa)) lie on the Cytoplasmic side of the membrane. Residues 198 to 216 (VVKGISVAKNHITLYIIAF) traverse the membrane as a helical segment. Residues 217-228 (AVATLMLTLGGY) are Periplasmic-facing. A helical membrane pass occupies residues 229–247 (AGYKYLVVAAAVSVWWLGM). Over 248-268 (ALRGYKVEDDKVWARKLFGFS) the chain is Cytoplasmic. The chain crosses the membrane as a helical span at residues 269 to 287 (IIAITALSIMMSVDFMVPN). Topologically, residues 288–296 (SQSLLTYVW) are periplasmic.

It belongs to the UbiA prenyltransferase family. Protoheme IX farnesyltransferase subfamily.

It is found in the cell inner membrane. The catalysed reaction is heme b + (2E,6E)-farnesyl diphosphate + H2O = Fe(II)-heme o + diphosphate. It participates in porphyrin-containing compound metabolism; heme O biosynthesis; heme O from protoheme: step 1/1. Converts heme B (protoheme IX) to heme O by substitution of the vinyl group on carbon 2 of heme B porphyrin ring with a hydroxyethyl farnesyl side group. The protein is Protoheme IX farnesyltransferase of Salmonella arizonae (strain ATCC BAA-731 / CDC346-86 / RSK2980).